Consider the following 364-residue polypeptide: MQPGSAPTETYDVQFSEKIERTRDQFKDFFNGEIDAFRSPASEYRMRAEFKIWHDKDTGRACYAMHQPKVKNQVIPIEDFEIGSARIRELMPDVLAAVNNSTLLKQKLFQIEFLTATSGDAVVSLIYHRPLSEQWQAEAEQLQSTLRCQLIGRSRKQKIALGRDYVLETLLVNDKSYTYQQVETGFTQPNAAVCQKMLTWAQTVSADIGGDLLELYCGNGNFTLPLAQNFSRVLATEVSKTSVKSALYNIEQNGATNIAIARLSSEEFTEAMNKVRRFRRLENIDLDSYQFSTIFVDPPRAGLDTDTVKLASRFDNIIYISCNPDTLADNLASLATTHEVTRLALFDQFPYTEHRECGVILRRR.

S-adenosyl-L-methionine is bound by residues Gln-188, Tyr-216, Asn-221, Glu-237, and Asp-297. Cys-322 functions as the Nucleophile in the catalytic mechanism. The Proton acceptor role is filled by Glu-356.

It belongs to the class I-like SAM-binding methyltransferase superfamily. RNA M5U methyltransferase family. TrmA subfamily.

It carries out the reaction uridine(54) in tRNA + S-adenosyl-L-methionine = 5-methyluridine(54) in tRNA + S-adenosyl-L-homocysteine + H(+). The catalysed reaction is uridine(341) in tmRNA + S-adenosyl-L-methionine = 5-methyluridine(341) in tmRNA + S-adenosyl-L-homocysteine + H(+). Dual-specificity methyltransferase that catalyzes the formation of 5-methyluridine at position 54 (m5U54) in all tRNAs, and that of position 341 (m5U341) in tmRNA (transfer-mRNA). This Teredinibacter turnerae (strain ATCC 39867 / T7901) protein is tRNA/tmRNA (uracil-C(5))-methyltransferase.